We begin with the raw amino-acid sequence, 207 residues long: Uracil phosphoribosyltransferase (207 aa).

5-phospho-alpha-D-ribose 1-diphosphate-binding positions include R77, R102, and 129–137; that span reads DPMLATGVS. Uracil contacts are provided by residues I192 and 197-199; that span reads GDA. A 5-phospho-alpha-D-ribose 1-diphosphate-binding site is contributed by D198.

Belongs to the UPRTase family. Mg(2+) serves as cofactor.

It carries out the reaction UMP + diphosphate = 5-phospho-alpha-D-ribose 1-diphosphate + uracil. The protein operates within pyrimidine metabolism; UMP biosynthesis via salvage pathway; UMP from uracil: step 1/1. Allosterically activated by GTP. In terms of biological role, catalyzes the conversion of uracil and 5-phospho-alpha-D-ribose 1-diphosphate (PRPP) to UMP and diphosphate. The protein is Uracil phosphoribosyltransferase of Fervidobacterium nodosum (strain ATCC 35602 / DSM 5306 / Rt17-B1).